The following is a 297-amino-acid chain: Glycerol-3-phosphate dehydrogenase [NAD(P)+] (297 aa).

NADPH contacts are provided by Trp-11, Arg-30, and Lys-79. Residues Lys-79, Gly-107, and Ser-109 each contribute to the sn-glycerol 3-phosphate site. Ala-111 is a binding site for NADPH. Positions 161, 214, 224, 225, and 226 each coordinate sn-glycerol 3-phosphate. Lys-161 serves as the catalytic Proton acceptor. An NADPH-binding site is contributed by Arg-225. Residues Val-249 and Glu-251 each coordinate NADPH.

The protein belongs to the NAD-dependent glycerol-3-phosphate dehydrogenase family.

It is found in the cytoplasm. The catalysed reaction is sn-glycerol 3-phosphate + NAD(+) = dihydroxyacetone phosphate + NADH + H(+). It catalyses the reaction sn-glycerol 3-phosphate + NADP(+) = dihydroxyacetone phosphate + NADPH + H(+). It functions in the pathway membrane lipid metabolism; glycerophospholipid metabolism. Catalyzes the reduction of the glycolytic intermediate dihydroxyacetone phosphate (DHAP) to sn-glycerol 3-phosphate (G3P), the key precursor for phospholipid synthesis. The chain is Glycerol-3-phosphate dehydrogenase [NAD(P)+] from Wolinella succinogenes (strain ATCC 29543 / DSM 1740 / CCUG 13145 / JCM 31913 / LMG 7466 / NCTC 11488 / FDC 602W) (Vibrio succinogenes).